Consider the following 333-residue polypeptide: Beta-ketoacyl-[acyl-carrier-protein] synthase III (333 aa).

Catalysis depends on residues Cys-116 and His-258. Positions 259–263 (QANKR) are ACP-binding. The active site involves Asn-288.

It belongs to the thiolase-like superfamily. FabH family. Homodimer.

The protein localises to the cytoplasm. It catalyses the reaction malonyl-[ACP] + acetyl-CoA + H(+) = 3-oxobutanoyl-[ACP] + CO2 + CoA. Its pathway is lipid metabolism; fatty acid biosynthesis. Functionally, catalyzes the condensation reaction of fatty acid synthesis by the addition to an acyl acceptor of two carbons from malonyl-ACP. Catalyzes the first condensation reaction which initiates fatty acid synthesis and may therefore play a role in governing the total rate of fatty acid production. Possesses both acetoacetyl-ACP synthase and acetyl transacylase activities. Its substrate specificity determines the biosynthesis of branched-chain and/or straight-chain of fatty acids. The protein is Beta-ketoacyl-[acyl-carrier-protein] synthase III of Koribacter versatilis (strain Ellin345).